Consider the following 572-residue polypeptide: Fatty acid amide hydrolase 1 (572 aa).

Positions 1–14 (MIFYLVLLVLGAIA) are cleaved as a signal peptide. Residues 32 to 63 (IVAQRRRDDLSKNVEQARKAADKLDTQRRDWI) adopt a coiled-coil conformation. Residues Lys-139 and Ser-214 each act as charge relay system in the active site. Residues Ser-214 and 235–238 (VGGS) each bind substrate. Residue Ser-238 is the Acyl-ester intermediate of the active site.

The protein belongs to the amidase family. As to expression, expressed in the pharynx, some pharyngeal neurons, the posterior intestine and anal depressor muscles.

It catalyses the reaction N-(5Z,8Z,11Z,14Z-eicosatetraenoyl)-ethanolamine + H2O = ethanolamine + (5Z,8Z,11Z,14Z)-eicosatetraenoate. The catalysed reaction is (9Z)-octadecenamide + H2O = (9Z)-octadecenoate + NH4(+). It carries out the reaction (5Z,8Z,11Z,14Z,17Z-eicosapentaenoyl) ethanolamine + H2O = (5Z,8Z,11Z,14Z,17Z)-eicosapentaenoate + ethanolamine. The enzyme catalyses N-(9Z-hexadecenoyl) ethanolamine + H2O = (9Z)-hexadecenoate + ethanolamine. It catalyses the reaction N-(9Z-octadecenoyl) ethanolamine + H2O = ethanolamine + (9Z)-octadecenoate. The catalysed reaction is N-octadecanoyl ethanolamine + H2O = octadecanoate + ethanolamine. It carries out the reaction N-docosanoyl-ethanolamine + H2O = docosanoate + ethanolamine. The enzyme catalyses N-(15Z-tetracosenoyl)-ethanolamine + H2O = (15Z)-tetracosenoate + ethanolamine. It catalyses the reaction N-hexadecanoylethanolamine + H2O = ethanolamine + hexadecanoate. The catalysed reaction is N-(9Z,12Z-octadecadienoyl)-ethanolamine + H2O = ethanolamine + (9Z,12Z)-octadecadienoate. It carries out the reaction (9Z)-octadecenoate + glycine = N-(9Z-octadecenoyl)glycine + H2O. The enzyme catalyses N-(5Z,8Z,11Z,14Z)-eicosatetraenoyl-glycine + H2O = (5Z,8Z,11Z,14Z)-eicosatetraenoate + glycine. It catalyses the reaction N-(5Z,8Z,11Z,14Z-eicosatetraenoyl)-L-serine + H2O = (5Z,8Z,11Z,14Z)-eicosatetraenoate + L-serine. Functionally, catalyzes the hydrolysis of endogenous amidated lipids like anandamide (AEA or N-(5Z,8Z,11Z,14Z-eicosatetraenoyl)-ethanolamine) and eicosapentaneoyl ethanolamide (EPEA or (5Z,8Z,11Z,14Z,17Z-eicosapentaenoyl) ethanolamine), as well as other fatty amides, to their corresponding fatty acids, thereby regulating the signaling functions of these molecules. EPEA promotes dauer formation and may constitute a signal of high nutrient availability. Breakdown of EPEA may promote lifespan extension when nutrient availability is high. Facilitates axon regeneration after injury by degradating inhibitory compounds such as AEA. FAAH cooperates with PM20D1 in the hydrolysis of amino acid-conjugated fatty acids such as N-fatty acyl glycine and N-fatty acyl-L-serine, thereby acting as a physiological regulator of specific subsets of intracellular, but not of extracellular, N-fatty acyl amino acids. The chain is Fatty acid amide hydrolase 1 from Caenorhabditis elegans.